We begin with the raw amino-acid sequence, 143 residues long: uncharacterized protein (143 aa).

The Rhodanese domain maps to 50 to 143 (NKEDAVVVDL…GENLPLVRGK (94 aa)). Lysine 91 carries the post-translational modification N6-acetyllysine.

This is an uncharacterized protein from Escherichia coli O6:H1 (strain CFT073 / ATCC 700928 / UPEC).